The following is a 212-amino-acid chain: Pyridoxine/pyridoxamine 5'-phosphate oxidase (212 aa).

Substrate-binding positions include 8-11 (RKNY) and K66. FMN contacts are provided by residues 61–66 (RIVLIK), 76–77 (FT), R82, K83, and Q105. Positions 123, 127, and 131 each coordinate substrate. Residues 140–141 (QS) and W184 contribute to the FMN site. Substrate is bound at residue 190-192 (RLH). R194 lines the FMN pocket.

Belongs to the pyridoxamine 5'-phosphate oxidase family. In terms of assembly, homodimer. Requires FMN as cofactor.

It catalyses the reaction pyridoxamine 5'-phosphate + O2 + H2O = pyridoxal 5'-phosphate + H2O2 + NH4(+). The enzyme catalyses pyridoxine 5'-phosphate + O2 = pyridoxal 5'-phosphate + H2O2. The protein operates within cofactor metabolism; pyridoxal 5'-phosphate salvage; pyridoxal 5'-phosphate from pyridoxamine 5'-phosphate: step 1/1. It participates in cofactor metabolism; pyridoxal 5'-phosphate salvage; pyridoxal 5'-phosphate from pyridoxine 5'-phosphate: step 1/1. Catalyzes the oxidation of either pyridoxine 5'-phosphate (PNP) or pyridoxamine 5'-phosphate (PMP) into pyridoxal 5'-phosphate (PLP). This Paraburkholderia phymatum (strain DSM 17167 / CIP 108236 / LMG 21445 / STM815) (Burkholderia phymatum) protein is Pyridoxine/pyridoxamine 5'-phosphate oxidase.